We begin with the raw amino-acid sequence, 184 residues long: Phosphonoformate cytidylyltransferase (184 aa).

The enzyme catalyses phosphonoformate + CTP = CMP-5'-phosphonoformate + diphosphate. It functions in the pathway secondary metabolite biosynthesis; bialaphos biosynthesis. Its function is as follows. Catalyzes the displacement of the beta- and gamma-phosphates of CTP by phosphonoformate to produce CMP-5'-phosphonoformate, an intermediate in the biosynthesis of phosphinothricin tripeptide (PTT), also known as bialaphos (BA), a natural-product antibiotic and potent herbicide. This chain is Phosphonoformate cytidylyltransferase, found in Streptomyces viridochromogenes (strain DSM 40736 / JCM 4977 / BCRC 1201 / Tue 494).